A 486-amino-acid polypeptide reads, in one-letter code: Hexosaminidase D (486 aa).

The Proton donor role is filled by glutamate 149.

This sequence belongs to the glycosyl hydrolase 20 family. Homodimer; disulfide-linked. Expressed in synovial fibroblasts and synovial membranes.

It is found in the cytoplasm. The protein localises to the nucleus. It localises to the extracellular vesicle. The enzyme catalyses Hydrolysis of terminal non-reducing N-acetyl-D-hexosamine residues in N-acetyl-beta-D-hexosaminides.. Its activity is regulated as follows. Inhibited by O-(2-acetamido-2-deoxy-D-glucopyranosylidene)amino N-phenylcarbamate (PUGNAc). Inhibited by galacto-NAG-thiazoline. Its function is as follows. Has hexosaminidase activity. Responsible for the cleavage of the monosaccharides N-acetylglucosamine (GlcNAc) and N-acetylgalactosamine (GalNAc) from cellular substrates. Has a preference for galactosaminide over glucosaminide substrates. The protein is Hexosaminidase D of Homo sapiens (Human).